We begin with the raw amino-acid sequence, 466 residues long: Asparagine--tRNA ligase (466 aa).

This sequence belongs to the class-II aminoacyl-tRNA synthetase family. As to quaternary structure, homodimer.

The protein localises to the cytoplasm. The enzyme catalyses tRNA(Asn) + L-asparagine + ATP = L-asparaginyl-tRNA(Asn) + AMP + diphosphate + H(+). The polypeptide is Asparagine--tRNA ligase (Buchnera aphidicola subsp. Baizongia pistaciae (strain Bp)).